A 161-amino-acid polypeptide reads, in one-letter code: Copper transporter 1 (161 aa).

The next 2 membrane-spanning stretches (helical) occupy residues 55 to 75 (GGMYALALIFVFALAVIVEFL) and 109 to 129 (VAYLLMLALMSFNGGVFLVAV).

This sequence belongs to the copper transporter (Ctr) (TC 1.A.56) family. SLC31A subfamily. As to quaternary structure, self-interacts. Interacts with SWEET11 and COPT2.

Its subcellular location is the cell membrane. Its function is as follows. Involved in the transport of copper, in cooperation with SWEET11 and COPT2. Contributes to the removal of copper (Cu) from xylem, and thus to the sensitivity toward bacterial pathogens such as X.oryzae pv. oryzae (Xoo). This Oryza sativa subsp. japonica (Rice) protein is Copper transporter 1 (COPT1).